A 395-amino-acid polypeptide reads, in one-letter code: Non-structural protein 1 (395 aa).

Positions 328–395 constitute a DRBM domain; it reads NYIQLLNEHS…AEQMFRHQCF (68 aa).

This Homo sapiens (Human) protein is Non-structural protein 1.